The sequence spans 132 residues: Transcription antitermination protein NusB (132 aa).

This sequence belongs to the NusB family.

Involved in transcription antitermination. Required for transcription of ribosomal RNA (rRNA) genes. Binds specifically to the boxA antiterminator sequence of the ribosomal RNA (rrn) operons. The polypeptide is Transcription antitermination protein NusB (Campylobacter jejuni subsp. jejuni serotype O:2 (strain ATCC 700819 / NCTC 11168)).